We begin with the raw amino-acid sequence, 673 residues long: Zinc finger protein 16 (673 aa).

Positions methionine 1–glutamate 10 are enriched in basic and acidic residues. The tract at residues methionine 1–serine 42 is disordered. The tract at residues tyrosine 62–isoleucine 210 is necessary for transcription activation. The segment at leucine 209–histidine 231 adopts a C2H2-type 1; degenerate zinc-finger fold. The C2H2-type 2; degenerate zinc finger occupies phenylalanine 237 to histidine 259. Lysine 253 is covalently cross-linked (Glycyl lysine isopeptide (Lys-Gly) (interchain with G-Cter in SUMO2)). C2H2-type zinc fingers lie at residues tyrosine 284–histidine 306, tyrosine 312–histidine 334, tyrosine 340–histidine 362, phenylalanine 368–histidine 390, tyrosine 396–histidine 418, tyrosine 424–histidine 446, and histidine 452–histidine 474. Residues arginine 332–glycine 364 are required for nuclear localization. A required for nuclear localization region spans residues serine 464 to alanine 494. An N6-acetyllysine modification is found at lysine 478. 7 C2H2-type zinc fingers span residues tyrosine 480–histidine 502, tyrosine 508–histidine 530, tyrosine 536–histidine 558, histidine 564–histidine 586, tyrosine 592–histidine 614, tyrosine 620–histidine 642, and tyrosine 648–histidine 670.

It belongs to the krueppel C2H2-type zinc-finger protein family. Interacts with INCA1; the interaction inhibits INCA1 activity and induces the cell cycle process.

The protein resides in the nucleus. Acts as a transcriptional activator. Promotes cell proliferation by facilitating the cell cycle phase transition from the S to G2/M phase. Involved in both the hemin- and phorbol myristate acetate (PMA)-induced erythroid and megakaryocytic differentiation, respectively. Also plays a role as an inhibitor of cell apoptosis. In Pan paniscus (Pygmy chimpanzee), this protein is Zinc finger protein 16 (ZNF16).